A 103-amino-acid polypeptide reads, in one-letter code: Nucleoid-associated protein Adeh_3636 (103 aa).

It belongs to the YbaB/EbfC family. Homodimer.

Its subcellular location is the cytoplasm. The protein localises to the nucleoid. Binds to DNA and alters its conformation. May be involved in regulation of gene expression, nucleoid organization and DNA protection. In Anaeromyxobacter dehalogenans (strain 2CP-C), this protein is Nucleoid-associated protein Adeh_3636.